The chain runs to 217 residues: Meiotically up-regulated gene 37 protein (217 aa).

In terms of biological role, has a role in meiosis. This is Meiotically up-regulated gene 37 protein (mug37) from Schizosaccharomyces pombe (strain 972 / ATCC 24843) (Fission yeast).